The primary structure comprises 427 residues: Enolase (427 aa).

Position 163 (Gln-163) interacts with (2R)-2-phosphoglycerate. Glu-205 functions as the Proton donor in the catalytic mechanism. The Mg(2+) site is built by Asp-242, Glu-285, and Asp-312. (2R)-2-phosphoglycerate-binding residues include Lys-337, Arg-366, Ser-367, and Lys-388. Lys-337 functions as the Proton acceptor in the catalytic mechanism.

The protein belongs to the enolase family. The cofactor is Mg(2+).

Its subcellular location is the cytoplasm. It localises to the secreted. The protein resides in the cell surface. The enzyme catalyses (2R)-2-phosphoglycerate = phosphoenolpyruvate + H2O. Its pathway is carbohydrate degradation; glycolysis; pyruvate from D-glyceraldehyde 3-phosphate: step 4/5. Its function is as follows. Catalyzes the reversible conversion of 2-phosphoglycerate (2-PG) into phosphoenolpyruvate (PEP). It is essential for the degradation of carbohydrates via glycolysis. This is Enolase from Rhodopseudomonas palustris (strain BisB5).